A 126-amino-acid chain; its full sequence is Protein ApaG (126 aa).

Residues 2–126 (SDPRYQIDVS…FRLAVPGALH (125 aa)) enclose the ApaG domain.

The polypeptide is Protein ApaG (Pseudomonas entomophila (strain L48)).